We begin with the raw amino-acid sequence, 490 residues long: UDP-N-acetylmuramate--L-alanine ligase (490 aa).

Residue 133-139 participates in ATP binding; sequence GTHGKTS.

This sequence belongs to the MurCDEF family.

Its subcellular location is the cytoplasm. It catalyses the reaction UDP-N-acetyl-alpha-D-muramate + L-alanine + ATP = UDP-N-acetyl-alpha-D-muramoyl-L-alanine + ADP + phosphate + H(+). Its pathway is cell wall biogenesis; peptidoglycan biosynthesis. Cell wall formation. The protein is UDP-N-acetylmuramate--L-alanine ligase of Saccharopolyspora erythraea (strain ATCC 11635 / DSM 40517 / JCM 4748 / NBRC 13426 / NCIMB 8594 / NRRL 2338).